The primary structure comprises 312 residues: Erlin (312 aa).

Topologically, residues 1–3 (MLT) are cytoplasmic. Residues 4–24 (ELALGLFALWIAIFSQALHKI) form a helical membrane-spanning segment. Over 25 to 312 (EEGHVGVYYR…FVMGTTQQTV (288 aa)) the chain is Lumenal. N-linked (GlcNAc...) asparagine glycosylation is present at asparagine 104.

This sequence belongs to the band 7/mec-2 family. Seems to form a multimeric complex. In terms of tissue distribution, expressed in the germline only.

The protein resides in the endoplasmic reticulum membrane. The sequence is that of Erlin from Caenorhabditis elegans.